A 505-amino-acid polypeptide reads, in one-letter code: 2,3-bisphosphoglycerate-independent phosphoglycerate mutase (505 aa).

Mn(2+) contacts are provided by Asp15 and Ser65. The active-site Phosphoserine intermediate is the Ser65. Residues His126, 156 to 157 (RD), Arg187, Arg193, 260 to 263 (RPDR), and Lys333 contribute to the substrate site. Mn(2+) is bound by residues Asp398, His402, Asp439, His440, and His457.

It belongs to the BPG-independent phosphoglycerate mutase family. Monomer. The cofactor is Mn(2+).

It carries out the reaction (2R)-2-phosphoglycerate = (2R)-3-phosphoglycerate. It functions in the pathway carbohydrate degradation; glycolysis; pyruvate from D-glyceraldehyde 3-phosphate: step 3/5. Its function is as follows. Catalyzes the interconversion of 2-phosphoglycerate and 3-phosphoglycerate. In Mycoplasmopsis pulmonis (strain UAB CTIP) (Mycoplasma pulmonis), this protein is 2,3-bisphosphoglycerate-independent phosphoglycerate mutase.